Here is a 466-residue protein sequence, read N- to C-terminus: Asparagine--tRNA ligase (466 aa).

The protein belongs to the class-II aminoacyl-tRNA synthetase family. In terms of assembly, homodimer.

The protein resides in the cytoplasm. It catalyses the reaction tRNA(Asn) + L-asparagine + ATP = L-asparaginyl-tRNA(Asn) + AMP + diphosphate + H(+). This chain is Asparagine--tRNA ligase, found in Xylella fastidiosa (strain Temecula1 / ATCC 700964).